The sequence spans 430 residues: Serine/threonine transporter SstT (430 aa).

A run of 9 helical transmembrane segments spans residues 24-44, 47-67, 82-102, 144-164, 186-206, 223-243, 294-314, 320-340, and 361-381; these read IIVG…VTWI, FGTL…FVLV, FGTV…VAVL, AIID…GLAM, VIRW…FTNV, LLVG…IFIF, IPLG…IMAM, LGIQ…ALGA, and FGIS…IGVI.

Belongs to the dicarboxylate/amino acid:cation symporter (DAACS) (TC 2.A.23) family.

The protein resides in the cell membrane. The catalysed reaction is L-serine(in) + Na(+)(in) = L-serine(out) + Na(+)(out). The enzyme catalyses L-threonine(in) + Na(+)(in) = L-threonine(out) + Na(+)(out). Involved in the import of serine and threonine into the cell, with the concomitant import of sodium (symport system). This chain is Serine/threonine transporter SstT, found in Bifidobacterium adolescentis (strain ATCC 15703 / DSM 20083 / NCTC 11814 / E194a).